We begin with the raw amino-acid sequence, 545 residues long: Mesoderm induction early response protein 2 (545 aa).

A Phosphoserine modification is found at S11. A disordered region spans residues 100–189; that stretch reads DPISDRESEG…SSDTEEDSLP (90 aa). Positions 140-153 are enriched in polar residues; it reads QSSADDLTPSVTSH. The 98-residue stretch at 195-292 folds into the ELM2 domain; it reads KEIMVGPQFQ…EALRRLRFNV (98 aa). The SANT domain maps to 297 to 349; it reads DGLCAWSEEECRNFEHGFRVHGKNFHLIQANKVRTRSVGECVEYYYLWKKSER. The segment at 364-464 is disordered; sequence YVPSGTTDAD…YQPAVTAPEP (101 aa).

As to quaternary structure, part of a complex containing at least CDYL, MIER1, MIER2, HDAC1 and HDAC2.

The protein localises to the nucleus. Functionally, transcriptional repressor. This is Mesoderm induction early response protein 2 (MIER2) from Homo sapiens (Human).